Here is a 335-residue protein sequence, read N- to C-terminus: Probable peroxidase 26 (335 aa).

An N-terminal signal peptide occupies residues 1-18; sequence MVMIHIFLTVMVVGGVSL. Cystine bridges form between C46–C122, C79–C84, C128–C331, and C205–C237. The active site involves R73. Ca(2+) contacts are provided by D78, V81, G83, D85, and S87. P168 contributes to the substrate binding site. H198 is a binding site for heme b. Residue S199 coordinates Ca(2+). N216 is a glycosylation site (N-linked (GlcNAc...) asparagine). Ca(2+) contacts are provided by D255 and S258. N259 and N273 each carry an N-linked (GlcNAc...) asparagine glycan.

This sequence belongs to the peroxidase family. Classical plant (class III) peroxidase subfamily. Requires heme b as cofactor. It depends on Ca(2+) as a cofactor.

The protein localises to the secreted. The enzyme catalyses 2 a phenolic donor + H2O2 = 2 a phenolic radical donor + 2 H2O. Functionally, removal of H(2)O(2), oxidation of toxic reductants, biosynthesis and degradation of lignin, suberization, auxin catabolism, response to environmental stresses such as wounding, pathogen attack and oxidative stress. The enzyme activity has to be proved. This chain is Probable peroxidase 26 (PER26), found in Arabidopsis thaliana (Mouse-ear cress).